The sequence spans 594 residues: Aspartate--tRNA(Asp/Asn) ligase (594 aa).

Glu-176 is an L-aspartate binding site. An aspartate region spans residues 200–203; it reads QIFK. An L-aspartate-binding site is contributed by Arg-222. ATP contacts are provided by residues 222-224 and Gln-231; that span reads RDE. Residue His-450 coordinates L-aspartate. ATP is bound at residue Glu-484. Residue Arg-491 coordinates L-aspartate. An ATP-binding site is contributed by 536 to 539; it reads GLDR.

It belongs to the class-II aminoacyl-tRNA synthetase family. Type 1 subfamily. Homodimer.

The protein resides in the cytoplasm. The catalysed reaction is tRNA(Asx) + L-aspartate + ATP = L-aspartyl-tRNA(Asx) + AMP + diphosphate. Its function is as follows. Aspartyl-tRNA synthetase with relaxed tRNA specificity since it is able to aspartylate not only its cognate tRNA(Asp) but also tRNA(Asn). Reaction proceeds in two steps: L-aspartate is first activated by ATP to form Asp-AMP and then transferred to the acceptor end of tRNA(Asp/Asn). This is Aspartate--tRNA(Asp/Asn) ligase from Geobacillus sp. (strain WCH70).